The chain runs to 498 residues: ATP synthase subunit beta, chloroplastic (498 aa).

172 to 179 (GGAGVGKT) provides a ligand contact to ATP.

This sequence belongs to the ATPase alpha/beta chains family. As to quaternary structure, F-type ATPases have 2 components, CF(1) - the catalytic core - and CF(0) - the membrane proton channel. CF(1) has five subunits: alpha(3), beta(3), gamma(1), delta(1), epsilon(1). CF(0) has four main subunits: a(1), b(1), b'(1) and c(9-12).

The protein localises to the plastid. Its subcellular location is the chloroplast thylakoid membrane. It catalyses the reaction ATP + H2O + 4 H(+)(in) = ADP + phosphate + 5 H(+)(out). Produces ATP from ADP in the presence of a proton gradient across the membrane. The catalytic sites are hosted primarily by the beta subunits. The polypeptide is ATP synthase subunit beta, chloroplastic (Calycanthus floridus var. glaucus (Eastern sweetshrub)).